The sequence spans 364 residues: 3-isopropylmalate dehydrogenase (364 aa).

NAD(+) is bound at residue 79–92 (GSKWDHLPEIEKPE). Residues Arg-100, Arg-110, Arg-139, and Asp-227 each contribute to the substrate site. Mg(2+) contacts are provided by Asp-227, Asp-251, and Asp-255. Residue 285–297 (GSAPNIAGKTIAN) coordinates NAD(+).

This sequence belongs to the isocitrate and isopropylmalate dehydrogenases family. LeuB type 1 subfamily. Homodimer. Mg(2+) serves as cofactor. The cofactor is Mn(2+).

The protein localises to the cytoplasm. It carries out the reaction (2R,3S)-3-isopropylmalate + NAD(+) = 4-methyl-2-oxopentanoate + CO2 + NADH. The protein operates within amino-acid biosynthesis; L-leucine biosynthesis; L-leucine from 3-methyl-2-oxobutanoate: step 3/4. Catalyzes the oxidation of 3-carboxy-2-hydroxy-4-methylpentanoate (3-isopropylmalate) to 3-carboxy-4-methyl-2-oxopentanoate. The product decarboxylates to 4-methyl-2 oxopentanoate. The chain is 3-isopropylmalate dehydrogenase from Buchnera aphidicola subsp. Thelaxes suberi.